The primary structure comprises 784 residues: LPS-assembly protein LptD (784 aa).

A signal peptide spans 1 to 24 (MKKRIPTLLATMIATALYSQQGLA). Intrachain disulfides connect Cys-31–Cys-724 and Cys-173–Cys-725.

Belongs to the LptD family. Component of the lipopolysaccharide transport and assembly complex. Interacts with LptE and LptA. Post-translationally, contains two intramolecular disulfide bonds.

Its subcellular location is the cell outer membrane. In terms of biological role, together with LptE, is involved in the assembly of lipopolysaccharide (LPS) at the surface of the outer membrane. The chain is LPS-assembly protein LptD from Shigella flexneri.